The sequence spans 656 residues: MIKSQKEYLERIAYLNTLSHHYYNLDEPIVSDAIYDELYQELKAYEEKNPNGIQANSPTQKVGATTTNSFNKNPHLMRMWSLDDVFNQSELQAWLQRILKAYPSASFVCSPKLDGVSLNLLYQHGKLVKATTRGNGLEGELVSANAKHIANIPHAIAYNGEIEIRGEVIISKKDFDALNQERLNANEPLFANPRNAASGSLRQLDSEITKKRKLQFIPWGVGKHSLNFLSFKECLDFIVSLGFSAIQYLSLNKNHQEIEDNYHTLIREREGFFALLDGMVIVVNELNIQKELGYTQKSPKFACAYKFPALEKHTKIVGVINQVGRSGAITPVALLEPVEIAGAMINRATLHNYSEIEKKNIMLSDRVVVIRSGDVIPKIIKPLESYRDGSQHKIERPKVCPICSHELLCEEIFTYCQNLNCPARLKESLIHFASKDALNIQGLGDKVIEQLFEEKLIFNALDLYALKLEDLMRLDKFKIKKAQNLLDAILKSKNPPLWRLINALGIEHIGKGASKTLAKYGLNVLEKSEAEFLEMEGFGVEMARSLVNFYASNQEFIRSLFELLNPKNSDMAEEKQKSSSVFNNKTIVLTGTLSKPRQEYAQMLENLGAKISSSVSAKTDFLIAGENPGSKLALAQKHGVSVLNEEELLKRLKELD.

Residues 32–36 and 81–82 contribute to the NAD(+) site; these read DAIYD and SL. K112 functions as the N6-AMP-lysine intermediate in the catalytic mechanism. NAD(+) is bound by residues R133, E167, and K306. The Zn(2+) site is built by C400, C403, C416, and C421. Residues 577–656 enclose the BRCT domain; it reads KSSSVFNNKT…ELLKRLKELD (80 aa).

The protein belongs to the NAD-dependent DNA ligase family. LigA subfamily. Mg(2+) serves as cofactor. The cofactor is Mn(2+).

The enzyme catalyses NAD(+) + (deoxyribonucleotide)n-3'-hydroxyl + 5'-phospho-(deoxyribonucleotide)m = (deoxyribonucleotide)n+m + AMP + beta-nicotinamide D-nucleotide.. Its function is as follows. DNA ligase that catalyzes the formation of phosphodiester linkages between 5'-phosphoryl and 3'-hydroxyl groups in double-stranded DNA using NAD as a coenzyme and as the energy source for the reaction. It is essential for DNA replication and repair of damaged DNA. This is DNA ligase from Helicobacter pylori (strain ATCC 700392 / 26695) (Campylobacter pylori).